A 326-amino-acid chain; its full sequence is Meso-diaminopimelate D-dehydrogenase (326 aa).

Residues tyrosine 11–leucine 14, threonine 35–arginine 37, cysteine 69–serine 72, serine 92–aspartate 94, and valine 121–proline 125 each bind NADP(+). Residues aspartate 94, aspartate 124, tryptophan 148, glutamine 154–glycine 155, threonine 173, arginine 199, histidine 249, and asparagine 276 contribute to the substrate site.

Belongs to the diaminopimelate dehydrogenase family. As to quaternary structure, homodimer.

The enzyme catalyses meso-2,6-diaminopimelate + NADP(+) + H2O = (S)-2-amino-6-oxoheptanedioate + NH4(+) + NADPH + H(+). It functions in the pathway amino-acid biosynthesis; L-lysine biosynthesis via DAP pathway; DL-2,6-diaminopimelate from (S)-tetrahydrodipicolinate: step 1/1. With respect to regulation, the enzyme is completely inhibited by p-chloromercuribenzoate and HgCl(2) in vitro. Thioglycollate, L-cysteine and Cu(2+) also strongly inhibit the enzyme. Its function is as follows. Catalyzes the reversible NADPH-dependent reductive amination of L-2-amino-6-oxopimelate, the acyclic form of L-tetrahydrodipicolinate, to generate the meso compound, D,L-2,6-diaminopimelate. Probably plays a role in lysine biosynthesis. Is highly specific for meso-2,6-diaminopimelate as the electron donor, since the following amino acids are inert for the oxidative deamination reaction: DL-2-aminopimelate, D-glutamate, L-glutamate, D-aspartate, L-aspartate, D-alanine, L-alanine, D-valine, L-valine, D-lysine, L-lysine, D-phenylalanine, L-phenylalanine, D-leucine, L-leucine, D-threonine, L-threonine, D-serine, L-serine, D-tryptophan, L-tryptophan, D-cysteine, L-cysteine, D-histidine, L-histidine, D-methionine, D-arginine, D-proline, D-asparagine, D-glutamine, D-isoleucine and D-ornithine. Moreover, exclusively uses NADP as the electron acceptor for the oxidative deamination of meso-DAP; NAD is inert. In Ureibacillus thermosphaericus, this protein is Meso-diaminopimelate D-dehydrogenase (ddh).